The primary structure comprises 93 residues: FMRFamide-like neuropeptides 22 (93 aa).

A signal peptide spans 1–19 (MNRSMIALCVVLMVSLVSA). The propeptide occupies 20–46 (QVFDLDGQQLAGLEQNDARLMEQQVKR). Residues Phe55, Phe67, and Phe79 each carry the phenylalanine amide modification. Positions 83–93 (SGAEAVSEQDY) are excised as a propeptide.

It belongs to the FARP (FMRFamide related peptide) family.

The protein resides in the secreted. In terms of biological role, FMRFamides and FMRFamide-like peptides are neuropeptides. SPSAKWMRF-amide: Acts as a ligand for the npr-22 receptor in vitro. This chain is FMRFamide-like neuropeptides 22, found in Caenorhabditis elegans.